The sequence spans 330 residues: Calponin-3 (330 aa).

Residue Lys23 is modified to N6-acetyllysine. A Calponin-homology (CH) domain is found at 26 to 130; that stretch reads QQAEEDLRNW…TLVALAGLAK (105 aa). At Lys158 the chain carries N6-methyllysine. 3 Calponin-like repeats span residues 164 to 189, 204 to 229, and 243 to 268; these read IGLQ…RHLY, ISLQ…RDIY, and ISLQ…RQVY. The tract at residues 279-330 is disordered; that stretch reads PVIHNGSQGTGTNGSEISDSDYQAEYPDEYHGEYPDDYPREYQYGDDQGIDY. Basic and acidic residues predominate over residues 306–318; it reads DEYHGEYPDDYPR.

Belongs to the calponin family.

Functionally, thin filament-associated protein that is implicated in the regulation and modulation of smooth muscle contraction. It is capable of binding to actin, calmodulin and tropomyosin. The interaction of calponin with actin inhibits the actomyosin Mg-ATPase activity. This Mus musculus (Mouse) protein is Calponin-3 (Cnn3).